The following is a 245-amino-acid chain: tRNA (guanine-N(1)-)-methyltransferase (245 aa).

S-adenosyl-L-methionine contacts are provided by residues Gly112 and 132-137 (IGDFVL).

The protein belongs to the RNA methyltransferase TrmD family. In terms of assembly, homodimer.

The protein resides in the cytoplasm. The enzyme catalyses guanosine(37) in tRNA + S-adenosyl-L-methionine = N(1)-methylguanosine(37) in tRNA + S-adenosyl-L-homocysteine + H(+). Functionally, specifically methylates guanosine-37 in various tRNAs. The sequence is that of tRNA (guanine-N(1)-)-methyltransferase from Geobacter sulfurreducens (strain ATCC 51573 / DSM 12127 / PCA).